Consider the following 231-residue polypeptide: Ribose-5-phosphate isomerase A (231 aa).

Substrate is bound by residues 32 to 35, 85 to 88, and 98 to 101; these read TGST, DGAD, and KGGG. Glu107 functions as the Proton acceptor in the catalytic mechanism. Lys125 contacts substrate.

This sequence belongs to the ribose 5-phosphate isomerase family. Homodimer.

The catalysed reaction is aldehydo-D-ribose 5-phosphate = D-ribulose 5-phosphate. It functions in the pathway carbohydrate degradation; pentose phosphate pathway; D-ribose 5-phosphate from D-ribulose 5-phosphate (non-oxidative stage): step 1/1. Its function is as follows. Catalyzes the reversible conversion of ribose-5-phosphate to ribulose 5-phosphate. The protein is Ribose-5-phosphate isomerase A of Paraburkholderia phymatum (strain DSM 17167 / CIP 108236 / LMG 21445 / STM815) (Burkholderia phymatum).